Here is a 133-residue protein sequence, read N- to C-terminus: DNA-directed RNA polymerases I and III subunit RPAC2 (133 aa).

Position 1 is an N-acetylmethionine (Met1).

Belongs to the archaeal Rpo11/eukaryotic RPB11/RPC19 RNA polymerase subunit family. As to quaternary structure, component of the RNA polymerase I and RNA polymerase III complexes consisting of at least 13 and 17 subunits, respectively. Pol I complex consists of a ten-subunit catalytic core composed of POLR1A/RPA1, POLR1B/RPA2, POLR1C/RPAC1, POLR1D/RPAC2, POLR1H/RPA12, POLR2E/RPABC1, POLR2F/RPABC2, POLR2H/RPABC3, POLR2K/RPABC4 and POLR2L/RPABC5; a mobile stalk subunit POLR1F/RPA43 protruding from the core and additional subunits homologous to general transcription factors POLR1E/RPA49 and POLR1G/RPA34. Part of Pol I pre-initiation complex (PIC), in which Pol I core assembles with RRN3 and promoter-bound UTBF and SL1/TIF-IB complex. Pol III complex consists of a ten-subunit catalytic core composed of POLR3A/RPC1, POLR3B/RPC2, POLR1C/RPAC1, POLR1D/RPAC2, POLR3K/RPC10, POLR2E/RPABC1, POLR2F/RPABC2, POLR2H/RPABC3, POLR2K/RPABC4 and POLR2L/RPABC5; a mobile stalk composed of two subunits POLR3H/RPC8 and CRCP/RPC9, protruding from the core and functioning primarily in transcription initiation; and additional subunits homologous to general transcription factors of the RNA polymerase II machinery, POLR3C/RPC3-POLR3F/RPC6-POLR3G/RPC7 heterotrimer required for transcription initiation and POLR3D/RPC4-POLR3E/RPC5 heterodimer involved in both transcription initiation and termination.

It localises to the nucleus. The protein resides in the nucleolus. DNA-dependent RNA polymerase catalyzes the transcription of DNA into RNA using the four ribonucleoside triphosphates as substrates. Common component of RNA polymerases I and III which synthesize ribosomal RNA precursors and short non-coding RNAs including 5S rRNA, snRNAs, tRNAs and miRNAs, respectively. The polypeptide is DNA-directed RNA polymerases I and III subunit RPAC2 (Homo sapiens (Human)).